Consider the following 165-residue polypeptide: Neurotrophin-3 (165 aa).

A signal peptide spans I1–S3. Residues T4 to R119 constitute a propeptide that is removed on maturation. N112 carries N-linked (GlcNAc...) asparagine glycosylation.

This sequence belongs to the NGF-beta family.

The protein resides in the secreted. In terms of biological role, seems to promote the survival of visceral and proprioceptive sensory neurons. This is Neurotrophin-3 (NTF3) from Aspidites melanocephalus (Black-headed python).